The sequence spans 364 residues: 4-hydroxy-3-methylbut-2-en-1-yl diphosphate synthase (flavodoxin) (364 aa).

Positions 268, 271, 303, and 310 each coordinate [4Fe-4S] cluster.

The protein belongs to the IspG family. It depends on [4Fe-4S] cluster as a cofactor.

It catalyses the reaction (2E)-4-hydroxy-3-methylbut-2-enyl diphosphate + oxidized [flavodoxin] + H2O + 2 H(+) = 2-C-methyl-D-erythritol 2,4-cyclic diphosphate + reduced [flavodoxin]. It functions in the pathway isoprenoid biosynthesis; isopentenyl diphosphate biosynthesis via DXP pathway; isopentenyl diphosphate from 1-deoxy-D-xylulose 5-phosphate: step 5/6. In terms of biological role, converts 2C-methyl-D-erythritol 2,4-cyclodiphosphate (ME-2,4cPP) into 1-hydroxy-2-methyl-2-(E)-butenyl 4-diphosphate. The chain is 4-hydroxy-3-methylbut-2-en-1-yl diphosphate synthase (flavodoxin) from Anoxybacillus flavithermus (strain DSM 21510 / WK1).